The chain runs to 325 residues: Tagatose 1,6-diphosphate aldolase 1 (325 aa).

This sequence belongs to the aldolase LacD family.

It catalyses the reaction D-tagatofuranose 1,6-bisphosphate = D-glyceraldehyde 3-phosphate + dihydroxyacetone phosphate. It participates in carbohydrate metabolism; D-tagatose 6-phosphate degradation; D-glyceraldehyde 3-phosphate and glycerone phosphate from D-tagatose 6-phosphate: step 2/2. The sequence is that of Tagatose 1,6-diphosphate aldolase 1 (lacD1) from Streptococcus pyogenes serotype M1.